The sequence spans 616 residues: Glutamine--fructose-6-phosphate aminotransferase [isomerizing] (616 aa).

C2 acts as the Nucleophile; for GATase activity in catalysis. The 221-residue stretch at 2 to 222 (CGIIGYSGPR…QERIVALSGD (221 aa)) folds into the Glutamine amidotransferase type-2 domain. The interval 70–89 (TGIGHTRWATHGEPSDRNAH) is disordered. SIS domains follow at residues 289-428 (IRDD…LRGF) and 461-606 (LAHW…VDRP). The active-site For Fru-6P isomerization activity is K611.

In terms of assembly, homodimer.

It is found in the cytoplasm. It catalyses the reaction D-fructose 6-phosphate + L-glutamine = D-glucosamine 6-phosphate + L-glutamate. In terms of biological role, catalyzes the first step in hexosamine metabolism, converting fructose-6P into glucosamine-6P using glutamine as a nitrogen source. The protein is Glutamine--fructose-6-phosphate aminotransferase [isomerizing] of Tropheryma whipplei (strain Twist) (Whipple's bacillus).